We begin with the raw amino-acid sequence, 471 residues long: Ribulose bisphosphate carboxylase large chain (471 aa).

Residues Asn115 and Thr165 each contribute to the substrate site. Lys167 serves as the catalytic Proton acceptor. Lys169 is a substrate binding site. Mg(2+) is bound by residues Lys193, Asp195, and Glu196. Lys193 carries the post-translational modification N6-carboxylysine. Catalysis depends on His286, which acts as the Proton acceptor. Substrate contacts are provided by Arg287, His319, and Ser371.

The protein belongs to the RuBisCO large chain family. Type I subfamily. As to quaternary structure, heterohexadecamer of 8 large chains and 8 small chains. Forms a CsoS2-CsoS1-RuBisCO complex. Mg(2+) serves as cofactor.

Its subcellular location is the carboxysome. It catalyses the reaction 2 (2R)-3-phosphoglycerate + 2 H(+) = D-ribulose 1,5-bisphosphate + CO2 + H2O. It carries out the reaction D-ribulose 1,5-bisphosphate + O2 = 2-phosphoglycolate + (2R)-3-phosphoglycerate + 2 H(+). Its function is as follows. RuBisCO catalyzes two reactions: the carboxylation of D-ribulose 1,5-bisphosphate, the primary event in carbon dioxide fixation, as well as the oxidative fragmentation of the pentose substrate in the photorespiration process. Both reactions occur simultaneously and in competition at the same active site. The polypeptide is Ribulose bisphosphate carboxylase large chain (Parasynechococcus marenigrum (strain WH8102)).